Here is a 297-residue protein sequence, read N- to C-terminus: Putative F-box protein At2g19630 (297 aa).

One can recognise an F-box domain in the interval 11–60 (TKNSLQIPIDLIIEIFLRLSVNSIARCRCVSKQWASTLSRPYFTELFLTR).

This is Putative F-box protein At2g19630 from Arabidopsis thaliana (Mouse-ear cress).